Here is a 402-residue protein sequence, read N- to C-terminus: Multidrug resistance protein MdtH (402 aa).

At 1 to 12 the chain is on the cytoplasmic side; it reads MSRVSQARNLGK. The chain crosses the membrane as a helical span at residues 13–33; sequence YFLLIDNMLVVLGFFVVFPLI. At 34–98 the chain is on the periplasmic side; sequence SIRFVDQMGW…GFATMGIAHE (65 aa). Residues 99–116 form a helical membrane-spanning segment; the sequence is PWLLWFSCLLSGLGGTLF. Residues 117–138 lie on the Cytoplasmic side of the membrane; the sequence is DPPRSALVVKLIRPQQRGRFFS. The helical transmembrane segment at 139–159 threads the bilayer; it reads LLMMQDSAGAVIGALLGSWLL. Residues 160–164 are Periplasmic-facing; the sequence is QYDFR. The helical transmembrane segment at 165–185 threads the bilayer; it reads LVCATGAVLFVLCAAFNAWLL. Over 186–213 the chain is Cytoplasmic; that stretch reads PAWKLSTVRTPVREGMTRVMRDKRFVTY. Residues 214–234 form a helical membrane-spanning segment; sequence VLTLAGYYMLAVQVMLMLPIM. Residues 235 to 243 are Periplasmic-facing; sequence VNDVAGAPS. The helical transmembrane segment at 244–264 threads the bilayer; the sequence is AVKWMYAIEACLSLTLLYPIA. The Cytoplasmic segment spans residues 265–276; it reads RWSEKHFRLEHR. A helical transmembrane segment spans residues 277 to 297; sequence LMAGLLIMSLSMMPVGMVSGL. The Periplasmic segment spans residues 298-299; that stretch reads QQ. Residues 300 to 320 traverse the membrane as a helical segment; it reads LFNLICLFYIGSIIAEPARET. Residues 321-339 are Cytoplasmic-facing; sequence LSASLADARARGSYMGFSR. The chain crosses the membrane as a helical span at residues 340-360; sequence LGLAIGGAIGYIGGGWLFDLG. At 361–367 the chain is on the periplasmic side; it reads KSAHQPE. The chain crosses the membrane as a helical span at residues 368-388; the sequence is LPWMMLGIIGIFTFLALGWQF. Topologically, residues 389–402 are cytoplasmic; sequence SQKRAARRLLERDA.

It belongs to the major facilitator superfamily. DHA1 family. MdtH (TC 2.A.1.2.21) subfamily.

It is found in the cell inner membrane. Its function is as follows. Confers resistance to norfloxacin and enoxacin. This chain is Multidrug resistance protein MdtH, found in Escherichia coli O9:H4 (strain HS).